Consider the following 605-residue polypeptide: Elongation factor 4 (605 aa).

A tr-type G domain is found at 9 to 191; it reads DTIRNFCIIA…AIIKRVPAPV (183 aa). Residues 21 to 26 and 138 to 141 contribute to the GTP site; these read DHGKST and NKID.

The protein belongs to the TRAFAC class translation factor GTPase superfamily. Classic translation factor GTPase family. LepA subfamily.

Its subcellular location is the cell inner membrane. The enzyme catalyses GTP + H2O = GDP + phosphate + H(+). In terms of biological role, required for accurate and efficient protein synthesis under certain stress conditions. May act as a fidelity factor of the translation reaction, by catalyzing a one-codon backward translocation of tRNAs on improperly translocated ribosomes. Back-translocation proceeds from a post-translocation (POST) complex to a pre-translocation (PRE) complex, thus giving elongation factor G a second chance to translocate the tRNAs correctly. Binds to ribosomes in a GTP-dependent manner. In Chlorobium phaeobacteroides (strain BS1), this protein is Elongation factor 4.